The chain runs to 115 residues: CRISPR-associated endoribonuclease Cas2 (115 aa).

Aspartate 22 lines the Mg(2+) pocket.

This sequence belongs to the CRISPR-associated endoribonuclease Cas2 protein family. As to quaternary structure, homodimer, forms a heterotetramer with a Cas1 homodimer. It depends on Mg(2+) as a cofactor.

Its function is as follows. CRISPR (clustered regularly interspaced short palindromic repeat), is an adaptive immune system that provides protection against mobile genetic elements (viruses, transposable elements and conjugative plasmids). CRISPR clusters contain sequences complementary to antecedent mobile elements and target invading nucleic acids. CRISPR clusters are transcribed and processed into CRISPR RNA (crRNA). Functions as a ssRNA-specific endoribonuclease. Involved in the integration of spacer DNA into the CRISPR cassette. This chain is CRISPR-associated endoribonuclease Cas2, found in Flavobacterium psychrophilum (strain ATCC 49511 / DSM 21280 / CIP 103535 / JIP02/86).